A 367-amino-acid polypeptide reads, in one-letter code: 2-oxoisovalerate dehydrogenase subunit alpha (367 aa).

Residues Phe66, Tyr95, 128-131 (MPEH), and Ser144 contribute to the substrate site. 94-96 (YYR) provides a ligand contact to thiamine diphosphate. Thiamine diphosphate is bound by residues 144-146 (SPI), 174-180 (GDGATSE), 204-208 (NFYAI), and His273. Residues Asp175, Asn204, and Tyr206 each coordinate Mg(2+).

The protein belongs to the BCKDHA family. In terms of assembly, heterotetramer of two alpha and two beta chains. Directly associated with ODBB in the E1 complex. Thiamine diphosphate is required as a cofactor.

The enzyme catalyses N(6)-[(R)-lipoyl]-L-lysyl-[protein] + 3-methyl-2-oxobutanoate + H(+) = N(6)-[(R)-S(8)-2-methylpropanoyldihydrolipoyl]-L-lysyl-[protein] + CO2. The branched-chain alpha-keto dehydrogenase complex catalyzes the overall conversion of alpha-keto acids to acyl-CoA and CO(2). It contains multiple copies of three enzymatic components: branched-chain alpha-keto acid decarboxylase (E1), lipoamide acyltransferase (E2) and lipoamide dehydrogenase (E3). This chain is 2-oxoisovalerate dehydrogenase subunit alpha, found in Thermus thermophilus (strain ATCC 27634 / DSM 579 / HB8).